Consider the following 312-residue polypeptide: Malate dehydrogenase (312 aa).

Residues 7–13 (GASGGIG) and D34 each bind NAD(+). Substrate-binding residues include R81 and R87. Residues N94 and 117-119 (ITN) each bind NAD(+). 2 residues coordinate substrate: N119 and R153. Residue H177 is the Proton acceptor of the active site. Residue M227 participates in NAD(+) binding.

The protein belongs to the LDH/MDH superfamily. MDH type 1 family. As to quaternary structure, homodimer.

The catalysed reaction is (S)-malate + NAD(+) = oxaloacetate + NADH + H(+). Catalyzes the reversible oxidation of malate to oxaloacetate. The polypeptide is Malate dehydrogenase (Actinobacillus succinogenes (strain ATCC 55618 / DSM 22257 / CCUG 43843 / 130Z)).